The primary structure comprises 347 residues: MRVADFHFDLPEALIARHPLPERRASRLLALDGPTGTLAHRQFADLLDYLRPGDLMVFNNTRVIPARLFGQKESGGKLEVLVERVLDQHRVLAHIRASKAPKPGTRILVEGGGSAEMLQRHDALFELAFAEPVLPLLERVGHMPLPPYIDRPDDAADRERYQTVYAQRAGAVAAPTAGLHFDEALLEAIRAKGVDTAFVTLHVGAGTFQPVRVERIEDHVMHREWLEVGQDVVDAVSVCRARGGRVVAVGTTSVRSLESAARDGELKPFSGDTDIFIYPGRPFHVVDALVTNFHLPESTLLMLVSAFAGYPETMAAYAAAVAQGYRFFSYGDAMFITRNPAPRGPED.

It belongs to the QueA family. As to quaternary structure, monomer.

The protein localises to the cytoplasm. It catalyses the reaction 7-aminomethyl-7-carbaguanosine(34) in tRNA + S-adenosyl-L-methionine = epoxyqueuosine(34) in tRNA + adenine + L-methionine + 2 H(+). Its pathway is tRNA modification; tRNA-queuosine biosynthesis. Its function is as follows. Transfers and isomerizes the ribose moiety from AdoMet to the 7-aminomethyl group of 7-deazaguanine (preQ1-tRNA) to give epoxyqueuosine (oQ-tRNA). This Pseudomonas aeruginosa (strain ATCC 15692 / DSM 22644 / CIP 104116 / JCM 14847 / LMG 12228 / 1C / PRS 101 / PAO1) protein is S-adenosylmethionine:tRNA ribosyltransferase-isomerase.